Reading from the N-terminus, the 474-residue chain is Bifunctional protein HldE (474 aa).

A ribokinase region spans residues 1 to 318 (MKLSMPRFDQ…RAVQREQGSE (318 aa)). Residue 194–197 (NLSE) coordinates ATP. Aspartate 263 is a catalytic residue. The cytidylyltransferase stretch occupies residues 343 to 474 (FTNGCFDILH…AIVEKIRQKG (132 aa)).

In the N-terminal section; belongs to the carbohydrate kinase PfkB family. The protein in the C-terminal section; belongs to the cytidylyltransferase family. Homodimer.

The enzyme catalyses D-glycero-beta-D-manno-heptose 7-phosphate + ATP = D-glycero-beta-D-manno-heptose 1,7-bisphosphate + ADP + H(+). It catalyses the reaction D-glycero-beta-D-manno-heptose 1-phosphate + ATP + H(+) = ADP-D-glycero-beta-D-manno-heptose + diphosphate. It functions in the pathway nucleotide-sugar biosynthesis; ADP-L-glycero-beta-D-manno-heptose biosynthesis; ADP-L-glycero-beta-D-manno-heptose from D-glycero-beta-D-manno-heptose 7-phosphate: step 1/4. The protein operates within nucleotide-sugar biosynthesis; ADP-L-glycero-beta-D-manno-heptose biosynthesis; ADP-L-glycero-beta-D-manno-heptose from D-glycero-beta-D-manno-heptose 7-phosphate: step 3/4. Functionally, catalyzes the phosphorylation of D-glycero-D-manno-heptose 7-phosphate at the C-1 position to selectively form D-glycero-beta-D-manno-heptose-1,7-bisphosphate. In terms of biological role, catalyzes the ADP transfer from ATP to D-glycero-beta-D-manno-heptose 1-phosphate, yielding ADP-D-glycero-beta-D-manno-heptose. This is Bifunctional protein HldE from Pseudomonas aeruginosa (strain UCBPP-PA14).